The chain runs to 202 residues: Dephospho-CoA kinase (202 aa).

Residues Thr3–Arg200 enclose the DPCK domain. Residue Gly11–Ala16 coordinates ATP.

Belongs to the CoaE family.

It is found in the cytoplasm. It catalyses the reaction 3'-dephospho-CoA + ATP = ADP + CoA + H(+). The protein operates within cofactor biosynthesis; coenzyme A biosynthesis; CoA from (R)-pantothenate: step 5/5. Functionally, catalyzes the phosphorylation of the 3'-hydroxyl group of dephosphocoenzyme A to form coenzyme A. This chain is Dephospho-CoA kinase, found in Thiobacillus denitrificans (strain ATCC 25259 / T1).